Consider the following 520-residue polypeptide: Succinyl-CoA:3-ketoacid coenzyme A transferase 2A, mitochondrial (520 aa).

A mitochondrion-targeting transit peptide spans 1–39 (MAALRLLAWAFSRRVSAHRPQPTLPHHLIRHYPTTRCGK). Residues 280-299 (ERLTTRDSPPAPGSKDQDPK) are disordered. Glu342 acts as the 5-glutamyl coenzyme A thioester intermediate in catalysis.

Belongs to the 3-oxoacid CoA-transferase family. Homodimer. Expressed in flagella of epididymal sperm.

Its subcellular location is the mitochondrion. The catalysed reaction is a 3-oxo acid + succinyl-CoA = a 3-oxoacyl-CoA + succinate. It participates in ketone metabolism; succinyl-CoA degradation; acetoacetyl-CoA from succinyl-CoA: step 1/1. Functionally, key enzyme for ketone body catabolism. Transfers the CoA moiety from succinate to acetoacetate. Formation of the enzyme-CoA intermediate proceeds via an unstable anhydride species formed between the carboxylate groups of the enzyme and substrate. Probably play and important roles in the energy metabolism of spermatozoa. The chain is Succinyl-CoA:3-ketoacid coenzyme A transferase 2A, mitochondrial (Oxct2a) from Rattus norvegicus (Rat).